Here is a 483-residue protein sequence, read N- to C-terminus: Keratin, type II cytoskeletal 7 (483 aa).

Position 2 is an N-acetylserine (Ser-2). Phosphoserine occurs at positions 2, 6, and 7. The segment at 2-107 is head; that stretch reads SVQFSSQTFS…DPQIQQVRKE (106 aa). Ser-12 is a glycosylation site (O-linked (GlcNAc) serine). The interval 14–37 is disordered; that stretch reads SAAFPRRGGQGRLSSVSSRAGSVS. Arg-20 is subject to Dimethylated arginine; alternate. Arg-20 carries the omega-N-methylarginine; alternate modification. A compositionally biased stretch (low complexity) spans 25 to 37; that stretch reads RLSSVSSRAGSVS. A phosphoserine mark is found at Ser-63 and Ser-88. Residues 107 to 143 are coil 1A; that stretch reads EEREQIKTLNNKFASFIDKVRFLEQQNQMLETKWRLL. One can recognise an IF rod domain in the interval 108-420; sequence EREQIKTLNN…KLLEGEESRL (313 aa). A Phosphothreonine modification is found at Thr-114. The linker 1 stretch occupies residues 144–161; it reads QEQKSSKGSSLPAIFEAH. Lys-147 participates in a covalent cross-link: Glycyl lysine isopeptide (Lys-Gly) (interchain with G-Cter in SUMO2). The coil 1B stretch occupies residues 162 to 253; the sequence is IANLRRQLDG…TLYEMELNEL (92 aa). The residue at position 196 (Lys-196) is an N6-acetyllysine. Residues 254–277 form a linker 12 region; the sequence is QTQISDTSVVLSMDNSRSLDLDSI. 2 positions are modified to phosphoserine: Ser-269 and Ser-271. The tract at residues 278-416 is coil 2; sequence ISEVKAQYED…ATYRKLLEGE (139 aa). Glycyl lysine isopeptide (Lys-Gly) (interchain with G-Cter in SUMO2) cross-links involve residues Lys-282 and Lys-303. Phosphothreonine is present on Thr-306. Glycyl lysine isopeptide (Lys-Gly) (interchain with G-Cter in SUMO2) cross-links involve residues Lys-313 and Lys-348. The tail stretch occupies residues 417 to 483; it reads ESRLSGDGVG…TSSSRRSVRN (67 aa).

The protein belongs to the intermediate filament family. Heterotetramer of two type I and two type II keratins. Interacts with eukaryotic translation initiator factor 3 (eIF3) subunit EIF3S10. Interacts with GPER1. Arg-20 is dimethylated, probably to asymmetric dimethylarginine.

Blocks interferon-dependent interphase and stimulates DNA synthesis in cells. This chain is Keratin, type II cytoskeletal 7, found in Potorous tridactylus (Potoroo).